Consider the following 225-residue polypeptide: Protein LiaH (225 aa).

2 coiled-coil regions span residues 58-151 (KKYE…KEHM) and 161-182 (ESAY…IRAN).

This sequence belongs to the PspA/Vipp/IM30 family.

In Bacillus subtilis (strain 168), this protein is Protein LiaH (liaH).